A 422-amino-acid polypeptide reads, in one-letter code: uncharacterized protein (422 aa).

A phosphoserine mark is found at S124, S126, and S151. Residues 144-166 (TNSLNHDSPPSTPPRRPDTSTSK) are disordered. Residue K250 forms a Glycyl lysine isopeptide (Lys-Gly) (interchain with G-Cter in SUMO2) linkage. 2 disordered regions span residues 251-285 (ADTT…NDSS) and 299-324 (GRGP…ATTA). Residues 271–282 (ETDEDLAWDSDN) are compositionally biased toward acidic residues. 2 positions are modified to phosphoserine: S280 and S306. Residues 310–324 (ALTVKAKATSSATTA) are compositionally biased toward low complexity. A Phosphoserine modification is found at S351.

This is an uncharacterized protein from Homo sapiens (Human).